Reading from the N-terminus, the 507-residue chain is Cytochrome P450 4X1 (507 aa).

Residues 14–34 (LHLALVFCLALVLMQAVKLYL) form a helical membrane-spanning segment. Cys-452 contributes to the heme binding site.

This sequence belongs to the cytochrome P450 family. Heme is required as a cofactor. Expressed at high levels in brain, mainly in neurons in different regions, including brain stem, hippocampus, cortex and cerebellum. Also expressed in cerebral vasculature. Not detected in kidney, nor liver.

Its subcellular location is the endoplasmic reticulum membrane. The protein localises to the microsome membrane. It carries out the reaction N-(5Z,8Z,11Z,14Z-eicosatetraenoyl)-ethanolamine + reduced [NADPH--hemoprotein reductase] + O2 = N-(14,15-epoxy-5Z,8Z,11Z-eicosatrienoyl)-ethanolamine + oxidized [NADPH--hemoprotein reductase] + H2O + H(+). In terms of biological role, a cytochrome P450 monooxygenase that selectively catalyzes the epoxidation of the last double bond of the arachidonoyl moiety of anandamide, potentially modulating endocannabinoid signaling. Has no hydroxylase activity toward various fatty acids, steroids and prostaglandins. Mechanistically, uses molecular oxygen inserting one oxygen atom into a substrate, and reducing the second into a water molecule, with two electrons provided by NADPH via cytochrome P450 reductase (CPR; NADPH-ferrihemoprotein reductase). The protein is Cytochrome P450 4X1 of Rattus norvegicus (Rat).